Reading from the N-terminus, the 280-residue chain is UPF0750 membrane protein YitT (280 aa).

The next 4 helical transmembrane spans lie at 9–29, 54–74, 80–100, and 151–171; these read LLIV…FLIP, FYIS…ILGW, SFTV…GILP, and VGTY…LLQG.

The protein belongs to the UPF0750 family.

The protein localises to the cell membrane. The polypeptide is UPF0750 membrane protein YitT (yitT) (Bacillus subtilis (strain 168)).